A 594-amino-acid chain; its full sequence is Arginine--tRNA ligase (594 aa).

The 'HIGH' region motif lies at 133–143 (ANPTGPMNIVS).

This sequence belongs to the class-I aminoacyl-tRNA synthetase family. Monomer.

It is found in the cytoplasm. It catalyses the reaction tRNA(Arg) + L-arginine + ATP = L-arginyl-tRNA(Arg) + AMP + diphosphate. The polypeptide is Arginine--tRNA ligase (Leptospira biflexa serovar Patoc (strain Patoc 1 / Ames)).